The sequence spans 1007 residues: Aldehyde reductase lnbA (1007 aa).

Residues 35–428 (QVRQSPSSIA…GRVDHQIKVR (394 aa)) form an adenylation (A) domain region. A Carrier domain is found at 540 to 617 (TLCQDTQTVL…ALASIIDHAK (78 aa)). Ser577 is subject to O-(pantetheine 4'-phosphoryl)serine. A short-chain dehydrogenase/reductase (R) domain region spans residues 659–998 (IFITGATGFV…PTLDCSLLKK (340 aa)).

It belongs to the NRP synthetase family.

It catalyses the reaction L-tyrosinal + AMP + diphosphate + NADP(+) = L-tyrosine + ATP + NADPH + H(+). It participates in secondary metabolite biosynthesis. Functionally, non-canonical nonribosomal peptide synthetase; part of the lnb gene cluster that mediates the biosynthesis of diastereomeric piperazines. Lna and lnb clusters encode sets of enzymes that produce overlapping sets of previously undescribed metabolites such as piperazinomycin-like metabolites or morpholine. The lna and lnb biosynthetic pathways appear to be part of a signaling network that controls the formation of sclerotia, a resilient overwintering structure. One primary function of the non-canonical nonribosomal peptide synthetases lnaA and lnbA consists in the reduction of L-tyrosine. The presence in the clusters of tailoring enzymes such as the oxidoreductases lnaB, lnbB, lnaE or lnbE, as well as of the cytochrome P450 monooxygenases lnaC, lnaD, or lnbC, might explain formation of various diastereomeric piperazines. This is Aldehyde reductase lnbA from Aspergillus flavus (strain ATCC 200026 / FGSC A1120 / IAM 13836 / NRRL 3357 / JCM 12722 / SRRC 167).